The following is a 519-amino-acid chain: Sterile alpha motif domain-containing protein 1 (519 aa).

A compositionally biased stretch (pro residues) spans 1–11 (MAGPPALPPPE). Disordered regions lie at residues 1–30 (MAGP…ASPH) and 87–232 (YKGS…PVSL). A compositionally biased stretch (low complexity) spans 12 to 29 (TAAAATTAAAASSSAASP). An SAMD1-like winged helix (WH) domain is found at 23–99 (SSSAASPHYQ…SISYRNAARV (77 aa)). Residue threonine 107 is modified to Phosphothreonine. The segment covering 108–133 (PPAPPRVPRGGPAAPPPTPAPPPAPV) has biased composition (pro residues). The segment covering 134-147 (AAPTRAPRAAAATA) has biased composition (low complexity). Serine 150 bears the Phosphoserine mark. Positions 157–166 (GPRAQRAAPL) are enriched in low complexity. Positions 167 to 217 (AAPPPAPAAPPAAAPPAGPRRAPPPAVAAREPPAPPQQQQPPPPQPQPPPE) are enriched in pro residues. Positions 218–230 (GGAARAGGPARPV) are enriched in low complexity. Serine 242 bears the Phosphoserine mark. The span at 261 to 271 (EAARGRLERTR) shows a compositional bias: basic and acidic residues. Disordered stretches follow at residues 261–381 (EAAR…PGSC) and 417–439 (PALP…KPTD). Positions 308–325 (KEEEDEDEDEEEEEEDNV) are enriched in acidic residues. Residues 443–511 (WTVMDVVEYF…KVLQQGHFED (69 aa)) form the SAM domain.

Homopolymerize into a closed pentameric ring. Interacts (via SAM domain) with L3MBTL3 (via SAM domain); the interaction mediates L3MBTL3 binding to chromatin. Interacts (via WH domain) with KDM1A; the interaction modulates KDM1A function. In terms of tissue distribution, expressed to similar levels in different organs. Expressed at higher levels in bone marrow, osteoclasts and spleen. Expressed in vascular smooth muscle cells.

The protein resides in the nucleus. Its subcellular location is the chromosome. The protein localises to the secreted. Unmethylated CpG islands (CGIs)-binding protein which localizes to H3K4me3-decorated CGIs, where it acts as a transcriptional repressor. Tethers L3MBTL3 to chromatin and interacts with the KDM1A histone demethylase complex to modulate H3K4me2 and H3K4me3 levels at CGIs. Plays a role in atherogenesis by binding with LDL on cell surface and promoting LDL oxidation which leads to the formation of foam cell. The sequence is that of Sterile alpha motif domain-containing protein 1 from Mus musculus (Mouse).